Here is a 297-residue protein sequence, read N- to C-terminus: Small ribosomal subunit protein uS2 (297 aa).

Residues D276 to W297 are disordered.

Belongs to the universal ribosomal protein uS2 family. In terms of assembly, component of the small ribosomal subunit. Mature ribosomes consist of a small (40S) and a large (60S) subunit. The 40S subunit contains about 33 different proteins and 1 molecule of RNA (18S). The 60S subunit contains about 49 different proteins and 3 molecules of RNA (25S, 5.8S and 5S). Interacts with RPS21.

It localises to the cytoplasm. In terms of biological role, required for the assembly and/or stability of the 40S ribosomal subunit. Required for the processing of the 20S rRNA-precursor to mature 18S rRNA in a late step of the maturation of 40S ribosomal subunits. The polypeptide is Small ribosomal subunit protein uS2 (Uncinocarpus reesii (strain UAMH 1704)).